A 758-amino-acid chain; its full sequence is 5-methyltetrahydropteroyltriglutamate--homocysteine methyltransferase (758 aa).

5-methyltetrahydropteroyltri-L-glutamate-binding positions include 17–20 (RELK) and Lys117. Residues 434–436 (IGS) and Glu487 each bind L-homocysteine. L-methionine is bound by residues 434 to 436 (IGS) and Glu487. 5-methyltetrahydropteroyltri-L-glutamate-binding positions include 518–519 (RC) and Trp564. Asp602 provides a ligand contact to L-homocysteine. Asp602 contributes to the L-methionine binding site. Residue Glu608 coordinates 5-methyltetrahydropteroyltri-L-glutamate. Residues His644, Cys646, and Glu668 each coordinate Zn(2+). His697 (proton donor) is an active-site residue. Cys729 contacts Zn(2+).

The protein belongs to the vitamin-B12 independent methionine synthase family. Requires Zn(2+) as cofactor.

The catalysed reaction is 5-methyltetrahydropteroyltri-L-glutamate + L-homocysteine = tetrahydropteroyltri-L-glutamate + L-methionine. The protein operates within amino-acid biosynthesis; L-methionine biosynthesis via de novo pathway; L-methionine from L-homocysteine (MetE route): step 1/1. Its function is as follows. Catalyzes the transfer of a methyl group from 5-methyltetrahydrofolate to homocysteine resulting in methionine formation. This Photorhabdus laumondii subsp. laumondii (strain DSM 15139 / CIP 105565 / TT01) (Photorhabdus luminescens subsp. laumondii) protein is 5-methyltetrahydropteroyltriglutamate--homocysteine methyltransferase.